The primary structure comprises 299 residues: Coenzyme PQQ synthesis protein B (299 aa).

This sequence belongs to the PqqB family.

Its pathway is cofactor biosynthesis; pyrroloquinoline quinone biosynthesis. Functionally, may be involved in the transport of PQQ or its precursor to the periplasm. This Methylorubrum populi (strain ATCC BAA-705 / NCIMB 13946 / BJ001) (Methylobacterium populi) protein is Coenzyme PQQ synthesis protein B.